Reading from the N-terminus, the 535-residue chain is MTTTIQNPILKGFNPDPSIVRVGDDYYIATSTFEWFPGIQLHHSRDLINWRLVGHALTRTSQLNMMGMDNSEGVYAPALTYSDGTFWLCFSNVHSCRGGNWMATPSYVVTADSIEGPWSEPVPIGNYGFDPSLFHDDDGKKYMLNMIWGGRAKTNFFGGIIMQEFDADEGKLVGAPKTVFEGTELGCTEGPQLLKKDDYYYLITAEGGTERNHAVTVCRSKHIWGPYEVHPENPILTSRFQEHAELSRAGHGFLVETQTGEWYMSHLCGRRIPNPEGYQFMPKYDNGFSILGRESALQKAHWQDDWPYIATGKTPVVEVEAPNLPLHPWPESPARDEFIDPTLSLISTLREPVSEKWLSLSERPGFLRLKGRHYLYSRYEQSMVARRFQAHNATVETKLEFKPNTPYEMAGLCAYYARNGHYFLKMTANDLGERVLQVVGNINDVYGEYSNDVVIGDADTVYMRLELKTQWYQYSYSLDGVDWYEIGPALNSTPLSDEGGPDIFRFTGSFAALFVADITGQKRHADFDYFEYLEH.

Residue Asp16 is the Proton acceptor of the active site. Residue Glu189 is the Proton donor of the active site.

The protein belongs to the glycosyl hydrolase 43 family.

The enzyme catalyses Hydrolysis of successive xylose residues from the non-reducing termini of (1-&gt;3)-beta-D-xylans.. With respect to regulation, inhibited by Ag(+), Cu(2+), Hg(2+), Mn(2+), Pb(2+), Zn(2+) and p-chloromercuric benzoic acid. In terms of biological role, beta-1,3-xylosidase that hydrolyzes beta-1,3-xylooligosaccharides to D-xylose. This is Xylan 1,3-beta-xylosidase (xloA) from Vibrio sp.